We begin with the raw amino-acid sequence, 938 residues long: Isoleucine--tRNA ligase (938 aa).

The short motif at 58–68 (PYANGNIHIGH) is the 'HIGH' region element. Glu-562 provides a ligand contact to L-isoleucyl-5'-AMP. The 'KMSKS' region motif lies at 603-607 (KMSKS). Position 606 (Lys-606) interacts with ATP. 4 residues coordinate Zn(2+): Cys-901, Cys-904, Cys-921, and Cys-924.

It belongs to the class-I aminoacyl-tRNA synthetase family. IleS type 1 subfamily. As to quaternary structure, monomer. It depends on Zn(2+) as a cofactor.

It localises to the cytoplasm. The enzyme catalyses tRNA(Ile) + L-isoleucine + ATP = L-isoleucyl-tRNA(Ile) + AMP + diphosphate. In terms of biological role, catalyzes the attachment of isoleucine to tRNA(Ile). As IleRS can inadvertently accommodate and process structurally similar amino acids such as valine, to avoid such errors it has two additional distinct tRNA(Ile)-dependent editing activities. One activity is designated as 'pretransfer' editing and involves the hydrolysis of activated Val-AMP. The other activity is designated 'posttransfer' editing and involves deacylation of mischarged Val-tRNA(Ile). This is Isoleucine--tRNA ligase from Actinobacillus pleuropneumoniae serotype 5b (strain L20).